The following is a 195-amino-acid chain: HTH-type transcriptional regulator BetI (195 aa).

An HTH tetR-type domain is found at 8–68 (SIRRRQLIDA…ATMRDITSQL (61 aa)). The segment at residues 31–50 (TIAQIARRAGVSTGIISHYF) is a DNA-binding region (H-T-H motif).

It participates in amine and polyamine biosynthesis; betaine biosynthesis via choline pathway [regulation]. In terms of biological role, repressor involved in the biosynthesis of the osmoprotectant glycine betaine. It represses transcription of the choline transporter BetT and the genes of BetAB involved in the synthesis of glycine betaine. This is HTH-type transcriptional regulator BetI from Escherichia coli O17:K52:H18 (strain UMN026 / ExPEC).